Reading from the N-terminus, the 196-residue chain is Putative 3-methyladenine DNA glycosylase (196 aa).

It belongs to the DNA glycosylase MPG family.

The polypeptide is Putative 3-methyladenine DNA glycosylase (Chlorobium luteolum (strain DSM 273 / BCRC 81028 / 2530) (Pelodictyon luteolum)).